A 200-amino-acid polypeptide reads, in one-letter code: Urease accessory protein UreG (200 aa).

8-15 (GPVGSGKT) contributes to the GTP binding site.

Belongs to the SIMIBI class G3E GTPase family. UreG subfamily. Homodimer. UreH, UreF and UreG form a complex that acts as a GTP-hydrolysis-dependent molecular chaperone, activating the urease apoprotein by helping to assemble the nickel containing metallocenter of UreC. The UreE protein probably delivers the nickel.

The protein localises to the cytoplasm. In terms of biological role, facilitates the functional incorporation of the urease nickel metallocenter. This process requires GTP hydrolysis, probably effectuated by UreG. This is Urease accessory protein UreG from Helicobacter hepaticus (strain ATCC 51449 / 3B1).